A 277-amino-acid chain; its full sequence is S-formylglutathione hydrolase FrmB (277 aa).

Residues serine 145, aspartate 221, and histidine 254 each act as charge relay system in the active site.

Belongs to the esterase D family.

It catalyses the reaction S-formylglutathione + H2O = formate + glutathione + H(+). In terms of biological role, serine hydrolase involved in the detoxification of formaldehyde. Hydrolyzes S-formylglutathione to glutathione and formate. In Escherichia coli O1:K1 / APEC, this protein is S-formylglutathione hydrolase FrmB (frmB).